The following is a 167-amino-acid chain: Small ribosomal subunit protein mS25 (167 aa).

This sequence belongs to the mitochondrion-specific ribosomal protein mS25 family. As to quaternary structure, component of the mitochondrial ribosome small subunit (28S) which comprises a 12S rRNA and about 30 distinct proteins.

Its subcellular location is the mitochondrion. The sequence is that of Small ribosomal subunit protein mS25 (mRpS25) from Drosophila melanogaster (Fruit fly).